The sequence spans 81 residues: Protein Vpu (81 aa).

The Extracellular segment spans residues 1–7 (MQSLQIL). The chain crosses the membrane as a helical span at residues 8–28 (AIVSLVVVAIIAIVVWTIVLI). At 29-81 (EYRKILRQRKIDRLFDRIREKAEDSGNESERDQEELSALVEMGHLAPWDVDDL) the chain is on the cytoplasmic side. Phosphoserine; by host CK2 is present on residues Ser-53 and Ser-57.

Belongs to the HIV-1 VPU protein family. As to quaternary structure, homopentamer. Interacts with host CD4 and BRTC; these interactions induce proteasomal degradation of CD4. Interacts with host BST2; this interaction leads to the degradation of host BST2. Interacts with host FBXW11. Interacts with host AP1M1; this interaction plays a role in the mistrafficking and subsequent degradation of host BST2. Interacts with host RANBP2; this interaction allows Vpu to down-regulate host BLM sumoylation. In terms of processing, phosphorylated by host CK2. This phosphorylation is necessary for interaction with human BTRC and degradation of CD4.

It is found in the host membrane. Ion channel activity is inhibited by hexamethylene amiloride in vitro. Enhances virion budding by targeting host CD4 and Tetherin/BST2 to proteasome degradation. Degradation of CD4 prevents any unwanted premature interactions between viral Env and its host receptor CD4 in the endoplasmic reticulum. Degradation of antiretroviral protein Tetherin/BST2 is important for virion budding, as BST2 tethers new viral particles to the host cell membrane. Mechanistically, Vpu bridges either CD4 or BST2 to BTRC, a substrate recognition subunit of the Skp1/Cullin/F-box protein E3 ubiquitin ligase, induces their ubiquitination and subsequent proteasomal degradation. The alteration of the E3 ligase specificity by Vpu seems to promote the degradation of host IKBKB, leading to NF-kappa-B down-regulation and subsequent apoptosis. Acts as a viroporin that forms an oligomeric ion channel in membranes. Modulates the host DNA repair mechanisms to promote degradation of nuclear viral cDNA in cells that are already productively infected in order to suppress immune sensing and proviral hyper-integration (superinfection). Manipulates PML-NBs and modulates SUMOylation of host BLM protein thereby enhancing its DNA-end processing activity toward viral unintegrated linear DNA. Also inhibits RAD52-mediated homologous repair of viral cDNA, preventing the generation of dead-end circular forms of single copies of the long terminal repeat and permitting sustained nucleolytic attack. This Homo sapiens (Human) protein is Protein Vpu.